Consider the following 354-residue polypeptide: MKKATSLSELGFDAGDASSGFFRPVSGDSSTPTSQHHRRRLTKVSVIGAGNVGMAIAQTILTRDLADEIALVDAVPDKLRGEMLDLQHAAAFLPRTRLVSGTDMSVTRGSDLVIVTAGARQIQGETRLDLLQRNVALFRKIVPPLAEQSHDALLLVVSNPVDVLTYVAWKLSGFPASRVIGSGTNLDSSRFRFLLAEHLDVNAQDVQAYMVGEHGDSSVAVWSSVSVAGMPVLKSLQESHRCFDEEALEGIRRAVVDSAYEVISLKGYTSWAIGYSVASLAASLLRDQRRIHPVSVLARGFHGIPDGTTSSSACPPRRPRRRPGRREMELTEEEAKRLRRSAKTIWENCQLLGL.

NAD(+) is bound by residues Asp73–Lys78 and Arg120. Residues Arg127, Asn159, and Arg190 each coordinate substrate. Asn159 lines the NAD(+) pocket. The active-site Proton acceptor is the His214. Thr269 provides a ligand contact to substrate. The interval His302–Glu332 is disordered.

It belongs to the LDH/MDH superfamily. LDH family. Homotetramer.

It catalyses the reaction (S)-lactate + NAD(+) = pyruvate + NADH + H(+). Its pathway is fermentation; pyruvate fermentation to lactate; (S)-lactate from pyruvate: step 1/1. This chain is L-lactate dehydrogenase, found in Zea mays (Maize).